Consider the following 195-residue polypeptide: MFIVGLTGGIGSGKSAASQWFEKQGIQVVDADIVAREVVDVGQPALKEIATAFGDWVLQADGSLNRRALREHIFQSPESRHTLEAITHPIIRKSIIEQLNAATSPYVILVSPLLFETNQHELTDRNLLIDASEEIQIARASQRDGQSIQQIQKIIAAQMPRAEKQQRADDIVLNDGHLKHLYQQLIALHENYLNH.

The region spanning 3–195 (IVGLTGGIGS…IALHENYLNH (193 aa)) is the DPCK domain. 11 to 16 (GSGKSA) is an ATP binding site.

The protein belongs to the CoaE family.

The protein localises to the cytoplasm. The catalysed reaction is 3'-dephospho-CoA + ATP = ADP + CoA + H(+). Its pathway is cofactor biosynthesis; coenzyme A biosynthesis; CoA from (R)-pantothenate: step 5/5. In terms of biological role, catalyzes the phosphorylation of the 3'-hydroxyl group of dephosphocoenzyme A to form coenzyme A. The chain is Dephospho-CoA kinase from Acinetobacter baylyi (strain ATCC 33305 / BD413 / ADP1).